A 3313-amino-acid polypeptide reads, in one-letter code: Cadherin EGF LAG seven-pass G-type receptor 3 (3313 aa).

The first 31 residues, 1-31, serve as a signal peptide directing secretion; sequence MARRPLWWGLPGPSTPLLLLLLFSLFPSSRE. The Extracellular segment spans residues 32–2538; it reads EMGGGGDQGW…RLEGDLELLA (2507 aa). Disordered regions lie at residues 148 to 187 and 205 to 269; these read LPLD…RNGR and EPGH…RMRS. The span at 258-268 shows a compositional bias: basic and acidic residues; sequence HESRTAPERMR. Cadherin domains follow at residues 317 to 424, 425 to 536, 537 to 642, 643 to 747, 748 to 849, 850 to 952, 953 to 1058, 1059 to 1160, and 1161 to 1257; these read PQYN…APVF, EQAQ…APQF, SEKR…SPIF, VSTP…RPEF, TMKE…RPVF, QSAH…APQF, VASH…APVF, PAEE…SPVL, and NNFQ…VVII. N-linked (GlcNAc...) asparagine glycosylation occurs at asparagine 623. Asparagine 838 carries an N-linked (GlcNAc...) asparagine glycan. Residues asparagine 1173, asparagine 1213, asparagine 1308, and asparagine 1318 are each glycosylated (N-linked (GlcNAc...) asparagine). One can recognise an EGF-like 1; calcium-binding domain in the interval 1366–1424; the sequence is DDNVCLREPCENYMKCVSVLRFDSSAPFLASASTLFRPIQPIAGLRCRCPPGFTGDFCE. 9 disulfide bridges follow: cysteine 1370–cysteine 1381, cysteine 1375–cysteine 1412, cysteine 1414–cysteine 1423, cysteine 1430–cysteine 1441, cysteine 1435–cysteine 1450, cysteine 1452–cysteine 1461, cysteine 1470–cysteine 1481, cysteine 1475–cysteine 1491, and cysteine 1493–cysteine 1504. Positions 1426 to 1462 constitute an EGF-like 2; calcium-binding domain; the sequence is ELDLCYSNPCRNGGACARREGGYTCVCRPRFTGEDCE. Positions 1466 to 1505 constitute an EGF-like 3; calcium-binding domain; it reads EAGRCVPGVCRNGGTCTNAPNGGFRCQCPAGGAFEGPRCE. The 205-residue stretch at 1506-1710 folds into the Laminin G-like 1 domain; it reads VAARSFPPSS…VANNGTTAGC (205 aa). 2 N-linked (GlcNAc...) asparagine glycosylation sites follow: asparagine 1640 and asparagine 1704. Disulfide bonds link cysteine 1684-cysteine 1710, cysteine 1717-cysteine 1728, cysteine 1722-cysteine 1737, and cysteine 1739-cysteine 1748. One can recognise an EGF-like 4; calcium-binding domain in the interval 1713–1749; it reads KSHFCASGPCKNGGLCSERWGGFSCDCPVGFGGKDCR. The region spanning 1753–1935 is the Laminin G-like 2 domain; it reads AHPYHFQGNG…SHRINVEPGC (183 aa). An N-linked (GlcNAc...) asparagine glycan is attached at asparagine 1761. 9 cysteine pairs are disulfide-bonded: cysteine 1906–cysteine 1935, cysteine 1941–cysteine 1952, cysteine 1946–cysteine 1961, cysteine 1963–cysteine 1972, cysteine 1976–cysteine 1987, cysteine 1981–cysteine 1999, cysteine 2001–cysteine 2010, cysteine 2018–cysteine 2031, and cysteine 2033–cysteine 2043. The region spanning 1937 to 1972 is the EGF-like 5; calcium-binding domain; the sequence is VTNPCASGPCPPHANCKDLWQTFSCTCWPGYYGPGC. Aspartate 1954 carries the post-translational modification (3R)-3-hydroxyaspartate. The 39-residue stretch at 1973–2011 folds into the EGF-like 6; calcium-binding domain; that stretch reads VDACLLNPCQNQGSCRHLQGGPHGYTCDCASGYFGQHCE. Residues 2012 to 2044 enclose the EGF-like 7; calcium-binding domain; the sequence is HRMDQQCPRGWWGSPTCGPCNCDVHKGFDPNCN. A glycan (N-linked (GlcNAc...) asparagine) is linked at asparagine 2044. The EGF-like 8; calcium-binding domain occupies 2046-2081; sequence TSGQCHCKEFHYRPRGSDSCLPCDCYPVGSTSRSCA. 5 disulfide bridges follow: cysteine 2050-cysteine 2065, cysteine 2052-cysteine 2068, cysteine 2070-cysteine 2080, cysteine 2089-cysteine 2098, and cysteine 2101-cysteine 2113. Positions 2068 to 2115 constitute a Laminin EGF-like domain; sequence CDCYPVGSTSRSCAPHSGQCPCRPGALGRQCNSCDSPFAEVTASGCRV. Position 2117 is a phosphotyrosine (tyrosine 2117). Residues asparagine 2173, asparagine 2192, asparagine 2382, asparagine 2472, and asparagine 2504 are each glycosylated (N-linked (GlcNAc...) asparagine). The disordered stretch occupies residues 2356 to 2395; the sequence is HTHVLLPSQSPQPSPSEVLPTSSNAENATASGVVSPPAPL. The 165-residue stretch at 2364–2528 folds into the GAIN-B domain; it reads QSPQPSPSEV…GVLMDASPRE (165 aa). The span at 2374 to 2387 shows a compositional bias: polar residues; sequence LPTSSNAENATASG. Cystine bridges form between cysteine 2478–cysteine 2510 and cysteine 2498–cysteine 2512. The segment at 2478 to 2528 is GPS; it reads CVQWDPPGPADQHGMWTARDCELVHRNGSHARCRCSRTGTFGVLMDASPRE. A helical membrane pass occupies residues 2539-2559; that stretch reads VFTHVVVAASVTALVLTAAVL. Residues 2560–2570 are Cytoplasmic-facing; sequence LSLRSLKSNVR. The helical transmembrane segment at 2571–2591 threads the bilayer; that stretch reads GIHANVAAALGVAELLFLLGI. The Extracellular segment spans residues 2592-2599; the sequence is HRTHNQLL. The helical transmembrane segment at 2600–2620 threads the bilayer; sequence CTVVAILLHYFFLSTFAWLLV. Residues 2621 to 2641 lie on the Cytoplasmic side of the membrane; the sequence is QGLHLYRMQVEPRNVDRGAMR. The helical transmembrane segment at 2642 to 2662 threads the bilayer; the sequence is FYHALGWGVPAVLLGLAVGLD. The Extracellular segment spans residues 2663–2679; that stretch reads PEGYGNPDFCWISIHEP. Residues 2680-2700 form a helical membrane-spanning segment; the sequence is LIWSFAGPIVLVIVMNGIMFL. The Cytoplasmic segment spans residues 2701-2724; the sequence is LAARTSCSTGQREAKKTSVLRTLR. Residues 2725–2745 traverse the membrane as a helical segment; it reads SSFLLLLLVSASWLFGLLAVN. Residues 2746–2752 lie on the Extracellular side of the membrane; that stretch reads HSVLAFH. The chain crosses the membrane as a helical span at residues 2753-2773; sequence YLHAGLCGLQGLAVLLLFCVL. Topologically, residues 2774 to 3313 are cytoplasmic; that stretch reads NADARAAWTP…SEVPRSEGHS (540 aa). Disordered stretches follow at residues 2887–2927 and 2977–3004; these read AGAD…RPLR and SNKD…RAQR. The segment covering 2889-2899 has biased composition (acidic residues); sequence ADSDSDSDLSL. A compositionally biased stretch (basic residues) spans 2918–2927; it reads TRGRFQRPLR. Tyrosine 3050 is modified (phosphotyrosine). Disordered regions lie at residues 3091–3242 and 3255–3313; these read APVL…PSTE and NSSA…EGHS. Phosphoserine is present on serine 3098. Over residues 3102-3119 the composition is skewed to basic and acidic residues; that stretch reads SQERLDTAPARLEPRDRG. Composition is skewed to low complexity over residues 3178–3197 and 3255–3289; these read QRPL…SLSR and NSSA…PSTP. Residues 3290–3301 are compositionally biased toward polar residues; that stretch reads RSATSHSISELS.

Belongs to the G-protein coupled receptor 2 family. LN-TM7 subfamily. The iron and 2-oxoglutarate dependent 3-hydroxylation of aspartate and asparagine is (R) stereospecific within EGF domains. Expressed in the brain. Expressed in cerebellum, olfactory bulb, cerebral cortex, hippocampus and brain stem.

Its subcellular location is the cell membrane. Its function is as follows. Receptor that may have an important role in cell/cell signaling during nervous system formation. In Rattus norvegicus (Rat), this protein is Cadherin EGF LAG seven-pass G-type receptor 3 (Celsr3).